The following is a 515-amino-acid chain: MRSFAPWLVSLLGASAVVAAADTESDVISLDQDTFESFMNEHGLVLAEFFAPWCGHCKALAPKYEEAATELKAKNIPLVKVDCTAEEDLCRSQGVEGYPTLKIFRGVDSSKPYQGARQTESIVSYMIKQSLPAVSSVNEENLEEIKTMDKIVVIGYIPSDDQETYQAFEKYAESQRDNYLFAATDDAAIAKSEGVEQPSIVLYKDFDEKKAVYDGEIEQEAIHSWVKSASTPLVGEIGPETYSGYIGAGVPLAYIFAETKEEREKYTEDFKPIAQKHKGAINIATIDAKMFGAHAGNLNLDSQKFPAFAIQDPAKNAKYPYDQAKELNADEVEKFIQDVLDGKVEPSIKSEPVPESQEGPVTVVVAHSYKDLVIDNDKDVLLEFYAPWCGHCKALAPKYDELAALYADHPDLAAKVTIAKIDATANDVPDPITGFPTLRLYPAGAKDSPIEYSGSRTVEDLANFVKENGKHNVDALNVASEETQEGGDVTEAAPSATEAETPAATDDEKAEHDEL.

A signal peptide spans 1–20 (MRSFAPWLVSLLGASAVVAA). 2 Thioredoxin domains span residues 21–132 (ADTE…QSLP) and 339–470 (VLDG…ENGK). Residues Cys54, Cys57, Cys389, and Cys392 each act as nucleophile in the active site. Intrachain disulfides connect Cys54–Cys57 and Cys389–Cys392. Residues 478-515 (VASEETQEGGDVTEAAPSATEAETPAATDDEKAEHDEL) are disordered. A compositionally biased stretch (low complexity) spans 490-504 (TEAAPSATEAETPAA). The segment covering 506–515 (DDEKAEHDEL) has biased composition (basic and acidic residues). The short motif at 512–515 (HDEL) is the Prevents secretion from ER element.

It belongs to the protein disulfide isomerase family.

It is found in the endoplasmic reticulum lumen. The enzyme catalyses Catalyzes the rearrangement of -S-S- bonds in proteins.. In terms of biological role, participates in the folding of proteins containing disulfide bonds, may be involved in glycosylation, prolyl hydroxylation and triglyceride transfer. This chain is Protein disulfide-isomerase (pdiA), found in Aspergillus niger.